Here is a 154-residue protein sequence, read N- to C-terminus: Toxin YhaV (154 aa).

In terms of assembly, homohexamer; forms a complex with PrlF (SohA) with stoichiometry PrlF(2)-YhaV(4), possibly as a YhaV(2)-PrlF(2)-YhaV(2) complex like the MazFE complex. May dimerize in solution.

Its function is as follows. Toxic component of a type II toxin-antitoxin (TA) system. Has RNase activity in vitro. Acts as a transcription factor. The YhaV/PrlF complex binds the prlF-yhaV operon, probably negatively regulating its expression. The polypeptide is Toxin YhaV (yhaV) (Escherichia coli O157:H7).